Here is a 413-residue protein sequence, read N- to C-terminus: Coiled-coil domain-containing protein 83 (413 aa).

2 coiled-coil regions span residues 32–186 (HCQI…RIIR) and 215–255 (IWEN…QLFN).

This Bos taurus (Bovine) protein is Coiled-coil domain-containing protein 83 (CCDC83).